Reading from the N-terminus, the 202-residue chain is LexA repressor (202 aa).

Positions 28-48 form a DNA-binding region, H-T-H motif; it reads RAEIAQRLGFRSPNAAEEHLK. Residues S119 and K156 each act as for autocatalytic cleavage activity in the active site.

This sequence belongs to the peptidase S24 family. Homodimer.

It catalyses the reaction Hydrolysis of Ala-|-Gly bond in repressor LexA.. Represses a number of genes involved in the response to DNA damage (SOS response), including recA and lexA. Binds to the 16 bp palindromic sequence 5'-CTGTATATATATACAG-3'. In the presence of single-stranded DNA, RecA interacts with LexA causing an autocatalytic cleavage which disrupts the DNA-binding part of LexA, leading to derepression of the SOS regulon and eventually DNA repair. The polypeptide is LexA repressor (Cronobacter sakazakii (strain ATCC BAA-894) (Enterobacter sakazakii)).